Consider the following 480-residue polypeptide: Glutamate--tRNA ligase (480 aa).

The 'HIGH' region motif lies at 21–31 (PSPTGYLHVGG). Positions 110, 112, 137, and 139 each coordinate Zn(2+). The 'KMSKS' region signature appears at 248 to 252 (KLSKR). Lysine 251 contributes to the ATP binding site.

It belongs to the class-I aminoacyl-tRNA synthetase family. Glutamate--tRNA ligase type 1 subfamily. In terms of assembly, monomer. The cofactor is Zn(2+).

The protein resides in the cytoplasm. It carries out the reaction tRNA(Glu) + L-glutamate + ATP = L-glutamyl-tRNA(Glu) + AMP + diphosphate. Its function is as follows. Catalyzes the attachment of glutamate to tRNA(Glu) in a two-step reaction: glutamate is first activated by ATP to form Glu-AMP and then transferred to the acceptor end of tRNA(Glu). This chain is Glutamate--tRNA ligase, found in Histophilus somni (strain 2336) (Haemophilus somnus).